A 257-amino-acid chain; its full sequence is Galactitol 2-dehydrogenase (257 aa).

NAD(+)-binding positions include 21–23, 67–68, Asn-94, Tyr-162, and Lys-166; these read RAI and DV. Catalysis depends on Tyr-162, which acts as the Proton acceptor.

The protein belongs to the short-chain dehydrogenases/reductases (SDR) family. Homotetramer. It depends on Mg(2+) as a cofactor.

The enzyme catalyses galactitol + NAD(+) = keto-D-tagatose + NADH + H(+). In terms of biological role, catalyzes the oxidation of galactitol to D-tagatose. Also catalyzes the oxidation of a wide range of substrates, including polyvalent aliphatic alcohols and polyols, to the corresponding ketones and ketoses. Galactitol is the preferred substrate. This chain is Galactitol 2-dehydrogenase, found in Rhizobium johnstonii (strain DSM 114642 / LMG 32736 / 3841) (Rhizobium leguminosarum bv. viciae).